We begin with the raw amino-acid sequence, 336 residues long: DNA-directed RNA polymerase subunit alpha (336 aa).

The segment at 1–232 is alpha N-terminal domain (alpha-NTD); it reads MIQKNWQELI…DQLGLFVNFE (232 aa). The alpha C-terminal domain (alpha-CTD) stretch occupies residues 248-336; that stretch reads FNPALLKKVD…ELAKRYEDQY (89 aa).

Belongs to the RNA polymerase alpha chain family. As to quaternary structure, homodimer. The RNAP catalytic core consists of 2 alpha, 1 beta, 1 beta' and 1 omega subunit. When a sigma factor is associated with the core the holoenzyme is formed, which can initiate transcription.

It carries out the reaction RNA(n) + a ribonucleoside 5'-triphosphate = RNA(n+1) + diphosphate. Functionally, DNA-dependent RNA polymerase catalyzes the transcription of DNA into RNA using the four ribonucleoside triphosphates as substrates. This Chelativorans sp. (strain BNC1) protein is DNA-directed RNA polymerase subunit alpha.